The sequence spans 118 residues: Aspartate 1-decarboxylase (118 aa).

Ser-25 (schiff-base intermediate with substrate; via pyruvic acid) is an active-site residue. A Pyruvic acid (Ser) modification is found at Ser-25. Thr-57 contributes to the substrate binding site. Residue Tyr-58 is the Proton donor of the active site. Position 73–75 (73–75) interacts with substrate; it reads GAA.

The protein belongs to the PanD family. In terms of assembly, heterooctamer of four alpha and four beta subunits. Requires pyruvate as cofactor. Is synthesized initially as an inactive proenzyme, which is activated by self-cleavage at a specific serine bond to produce a beta-subunit with a hydroxyl group at its C-terminus and an alpha-subunit with a pyruvoyl group at its N-terminus.

It is found in the cytoplasm. The catalysed reaction is L-aspartate + H(+) = beta-alanine + CO2. Its pathway is cofactor biosynthesis; (R)-pantothenate biosynthesis; beta-alanine from L-aspartate: step 1/1. Catalyzes the pyruvoyl-dependent decarboxylation of aspartate to produce beta-alanine. This is Aspartate 1-decarboxylase from Leptospira biflexa serovar Patoc (strain Patoc 1 / Ames).